The chain runs to 178 residues: Ribonuclease M5 (178 aa).

The 94-residue stretch at 10–103 (DGVIVCEGKT…NSTKIGVAEA (94 aa)) folds into the Toprim domain. 3 residues coordinate Mg(2+): glutamate 16, aspartate 62, and aspartate 64.

Belongs to the ribonuclease M5 family. Mg(2+) serves as cofactor.

The protein localises to the cytoplasm. The enzyme catalyses Endonucleolytic cleavage of RNA, removing 21 and 42 nucleotides, respectively, from the 5'- and 3'-termini of a 5S-rRNA precursor.. In terms of biological role, required for correct processing of both the 5' and 3' ends of 5S rRNA precursor. Cleaves both sides of a double-stranded region yielding mature 5S rRNA in one step. The polypeptide is Ribonuclease M5 (Mycoplasma pneumoniae (strain ATCC 29342 / M129 / Subtype 1) (Mycoplasmoides pneumoniae)).